The sequence spans 615 residues: Elongation factor 4 (615 aa).

The tr-type G domain maps to 17–198 (ASIRNFCIIA…RVSRTIPAPV (182 aa)). GTP-binding positions include 29-34 (DHGKST) and 145-148 (NKID).

It belongs to the TRAFAC class translation factor GTPase superfamily. Classic translation factor GTPase family. LepA subfamily.

It localises to the cell membrane. The catalysed reaction is GTP + H2O = GDP + phosphate + H(+). In terms of biological role, required for accurate and efficient protein synthesis under certain stress conditions. May act as a fidelity factor of the translation reaction, by catalyzing a one-codon backward translocation of tRNAs on improperly translocated ribosomes. Back-translocation proceeds from a post-translocation (POST) complex to a pre-translocation (PRE) complex, thus giving elongation factor G a second chance to translocate the tRNAs correctly. Binds to ribosomes in a GTP-dependent manner. The chain is Elongation factor 4 from Clavibacter sepedonicus (Clavibacter michiganensis subsp. sepedonicus).